We begin with the raw amino-acid sequence, 130 residues long: Small ribosomal subunit protein uS8 (130 aa).

The protein belongs to the universal ribosomal protein uS8 family. As to quaternary structure, part of the 30S ribosomal subunit. Contacts proteins S5 and S12.

Its function is as follows. One of the primary rRNA binding proteins, it binds directly to 16S rRNA central domain where it helps coordinate assembly of the platform of the 30S subunit. The chain is Small ribosomal subunit protein uS8 from Klebsiella pneumoniae subsp. pneumoniae (strain ATCC 700721 / MGH 78578).